Here is a 716-residue protein sequence, read N- to C-terminus: DNA ligase (716 aa).

NAD(+) contacts are provided by residues 49 to 53, 98 to 99, and E131; these read DAEYD and SL. K133 (N6-AMP-lysine intermediate) is an active-site residue. NAD(+)-binding residues include R154, E191, K308, and K332. Positions 437, 439, 461, and 467 each coordinate Zn(2+). The 79-residue stretch at 638-716 folds into the BRCT domain; sequence KRHSPIATKT…EDEWLQLIAE (79 aa).

Belongs to the NAD-dependent DNA ligase family. LigA subfamily. Mg(2+) is required as a cofactor. It depends on Mn(2+) as a cofactor.

It catalyses the reaction NAD(+) + (deoxyribonucleotide)n-3'-hydroxyl + 5'-phospho-(deoxyribonucleotide)m = (deoxyribonucleotide)n+m + AMP + beta-nicotinamide D-nucleotide.. In terms of biological role, DNA ligase that catalyzes the formation of phosphodiester linkages between 5'-phosphoryl and 3'-hydroxyl groups in double-stranded DNA using NAD as a coenzyme and as the energy source for the reaction. It is essential for DNA replication and repair of damaged DNA. The chain is DNA ligase from Bradyrhizobium sp. (strain BTAi1 / ATCC BAA-1182).